Reading from the N-terminus, the 180-residue chain is Large ribosomal subunit protein uL5 (180 aa).

Belongs to the universal ribosomal protein uL5 family. In terms of assembly, part of the 50S ribosomal subunit; part of the 5S rRNA/L5/L18/L25 subcomplex. Contacts the 5S rRNA and the P site tRNA. Forms a bridge to the 30S subunit in the 70S ribosome.

In terms of biological role, this is one of the proteins that bind and probably mediate the attachment of the 5S RNA into the large ribosomal subunit, where it forms part of the central protuberance. In the 70S ribosome it contacts protein S13 of the 30S subunit (bridge B1b), connecting the 2 subunits; this bridge is implicated in subunit movement. Contacts the P site tRNA; the 5S rRNA and some of its associated proteins might help stabilize positioning of ribosome-bound tRNAs. This Stenotrophomonas maltophilia (strain K279a) protein is Large ribosomal subunit protein uL5.